A 209-amino-acid polypeptide reads, in one-letter code: MSLLLVIFLLELVVQLVNTIGAKTINNLLWRFYLSIPGSPLAKDFAEQRAKQKEYLQVRHDLNATSSQDEFAKWARLQRKHDKLMDELEKKKSQLDAHRTSFSRKLTIYRWILTRGMQWFLCFWFSSQPMFWLPYGWFPYWVEWLVSFPNAPMGSVSIVVWQSACSGVLALVIEAVMAVVRYTGGTGMQKQRQPVPAAGGAPGTSKKDL.

Residues 1–3 lie on the Lumenal side of the membrane; that stretch reads MSL. The chain crosses the membrane as a helical span at residues 4–23; it reads LLVIFLLELVVQLVNTIGAK. The Cytoplasmic portion of the chain corresponds to 24-110; that stretch reads TINNLLWRFY…SFSRKLTIYR (87 aa). The stretch at 74 to 101 forms a coiled coil; it reads WARLQRKHDKLMDELEKKKSQLDAHRTS. Residues 111–131 form a helical membrane-spanning segment; it reads WILTRGMQWFLCFWFSSQPMF. Topologically, residues 132-155 are lumenal; that stretch reads WLPYGWFPYWVEWLVSFPNAPMGS. Residues 156–172 form a helical membrane-spanning segment; the sequence is VSIVVWQSACSGVLALV. Topologically, residues 173 to 209 are cytoplasmic; it reads IEAVMAVVRYTGGTGMQKQRQPVPAAGGAPGTSKKDL. The tract at residues 188–209 is disordered; it reads MQKQRQPVPAAGGAPGTSKKDL.

Belongs to the WRB/GET1 family. As to quaternary structure, interacts with GET3.

Its subcellular location is the endoplasmic reticulum membrane. Functionally, required for the post-translational delivery of tail-anchored (TA) proteins to the endoplasmic reticulum. Acts as a membrane receptor for soluble GET3, which recognizes and selectively binds the transmembrane domain of TA proteins in the cytosol. This Chaetomium thermophilum (strain DSM 1495 / CBS 144.50 / IMI 039719) (Thermochaetoides thermophila) protein is Protein GET1.